The primary structure comprises 202 residues: Small ribosomal subunit protein uS4 (202 aa).

The S4 RNA-binding domain maps to 94-157 (SRLDSLVYRA…LEIPLIKNTL (64 aa)).

This sequence belongs to the universal ribosomal protein uS4 family. Part of the 30S ribosomal subunit. Contacts protein S5. The interaction surface between S4 and S5 is involved in control of translational fidelity.

Functionally, one of the primary rRNA binding proteins, it binds directly to 16S rRNA where it nucleates assembly of the body of the 30S subunit. Its function is as follows. With S5 and S12 plays an important role in translational accuracy. This is Small ribosomal subunit protein uS4 from Ureaplasma parvum serovar 3 (strain ATCC 27815 / 27 / NCTC 11736).